We begin with the raw amino-acid sequence, 441 residues long: tRNA modification GTPase MnmE (441 aa).

3 residues coordinate (6S)-5-formyl-5,6,7,8-tetrahydrofolate: arginine 21, glutamate 78, and lysine 117. One can recognise a TrmE-type G domain in the interval 211 to 363 (GIVMTIVGKP…LENKIVSKVK (153 aa)). Asparagine 221 is a binding site for K(+). Residues 221 to 226 (NSGKST), 240 to 246 (TDIPGTT), and 265 to 268 (DTAG) each bind GTP. Serine 225 is a Mg(2+) binding site. Threonine 240, isoleucine 242, and threonine 245 together coordinate K(+). Threonine 246 provides a ligand contact to Mg(2+). Lysine 441 serves as a coordination point for (6S)-5-formyl-5,6,7,8-tetrahydrofolate.

It belongs to the TRAFAC class TrmE-Era-EngA-EngB-Septin-like GTPase superfamily. TrmE GTPase family. As to quaternary structure, homodimer. Heterotetramer of two MnmE and two MnmG subunits. Requires K(+) as cofactor.

The protein resides in the cytoplasm. Functionally, exhibits a very high intrinsic GTPase hydrolysis rate. Involved in the addition of a carboxymethylaminomethyl (cmnm) group at the wobble position (U34) of certain tRNAs, forming tRNA-cmnm(5)s(2)U34. This chain is tRNA modification GTPase MnmE, found in Thermosipho melanesiensis (strain DSM 12029 / CIP 104789 / BI429).